A 690-amino-acid chain; its full sequence is Proprotein convertase subtilisin/kexin type 9 (690 aa).

A signal peptide spans 1–28; sequence MGTVSSRRSWWPLPLLLLLLLGPAGARA. Positions 29–150 are excised as a propeptide; it reads QEDEDGDYEE…IEEDSSVFAQ (122 aa). A Sulfotyrosine modification is found at Tyr-36. A Phosphoserine modification is found at Ser-45. Positions 75–147 constitute an Inhibitor I9 domain; that stretch reads TYVVVLKEET…VDYIEEDSSV (73 aa). Positions 153 to 459 constitute a Peptidase S8 domain; sequence PWNLERITPP…GWQLFCRTVW (307 aa). Catalysis depends on charge relay system residues Asp-184 and His-224. 2 cysteine pairs are disulfide-bonded: Cys-221–Cys-253 and Cys-321–Cys-356. Ser-384 acts as the Charge relay system in catalysis. Residues 448–690 are C-terminal domain; sequence GAGWQLFCRT…HLVQASQELQ (243 aa). Cystine bridges form between Cys-455-Cys-525, Cys-475-Cys-524, and Cys-484-Cys-507. Asn-531 carries N-linked (GlcNAc...) asparagine glycosylation. 6 disulfide bridges follow: Cys-532–Cys-599, Cys-550–Cys-598, Cys-560–Cys-586, Cys-606–Cys-677, Cys-624–Cys-676, and Cys-633–Cys-652. Residue Ser-686 is modified to Phosphoserine.

The protein belongs to the peptidase S8 family. Monomer. Can self-associate to form dimers and higher multimers which may have increased LDLR degrading activity. The precursor protein but not the mature protein may form multimers. Interacts with APOB, VLDLR, LRP8/APOER2 and BACE1. The full-length immature form (pro-PCSK9) interacts with SCNN1A, SCNN1B and SCNN1G. The pro-PCSK9 form (via C-terminal domain) interacts with LDLR. Interacts (via the C-terminal domain) with ANXA2 (via repeat Annexin 1); the interaction inhibits the degradation of LDLR. Ca(2+) is required as a cofactor. Post-translationally, cleavage by furin and PCSK5 generates a truncated inactive protein that is unable to induce LDLR degradation. Undergoes autocatalytic cleavage in the endoplasmic reticulum to release the propeptide from the N-terminus and the cleavage of the propeptide is strictly required for its maturation and activation. The cleaved propeptide however remains associated with the catalytic domain through non-covalent interactions, preventing potential substrates from accessing its active site. As a result, it is secreted from cells as a propeptide-containing, enzymatically inactive protein. In terms of processing, phosphorylation protects the propeptide against proteolysis.

The protein localises to the cytoplasm. It localises to the secreted. The protein resides in the endosome. It is found in the lysosome. Its subcellular location is the cell surface. The protein localises to the endoplasmic reticulum. It localises to the golgi apparatus. Its proteolytic activity is autoinhibited by the non-covalent binding of the propeptide to the catalytic domain. Inhibited by EGTA. Crucial player in the regulation of plasma cholesterol homeostasis. Binds to low-density lipid receptor family members: low density lipoprotein receptor (LDLR), very low density lipoprotein receptor (VLDLR), apolipoprotein E receptor (LRP1/APOER) and apolipoprotein receptor 2 (LRP8/APOER2), and promotes their degradation in intracellular acidic compartments. Acts via a non-proteolytic mechanism to enhance the degradation of the hepatic LDLR through a clathrin LDLRAP1/ARH-mediated pathway. May prevent the recycling of LDLR from endosomes to the cell surface or direct it to lysosomes for degradation. Can induce ubiquitination of LDLR leading to its subsequent degradation. Inhibits intracellular degradation of APOB via the autophagosome/lysosome pathway in a LDLR-independent manner. Involved in the disposal of non-acetylated intermediates of BACE1 in the early secretory pathway. Inhibits epithelial Na(+) channel (ENaC)-mediated Na(+) absorption by reducing ENaC surface expression primarily by increasing its proteasomal degradation. Regulates neuronal apoptosis via modulation of LRP8/APOER2 levels and related anti-apoptotic signaling pathways. The sequence is that of Proprotein convertase subtilisin/kexin type 9 (PCSK9) from Gorilla gorilla gorilla (Western lowland gorilla).